Reading from the N-terminus, the 83-residue chain is RNA-binding protein Hfq (83 aa).

The Sm domain maps to 10 to 69 (DPFLNALRREHVPVSIYLVNGIKLQGQIESFDQYVVLLRNTVTQMVYKHAISTIVPGRAV).

The protein belongs to the Hfq family. In terms of assembly, homohexamer.

RNA chaperone that binds small regulatory RNA (sRNAs) and mRNAs to facilitate mRNA translational regulation in response to envelope stress, environmental stress and changes in metabolite concentrations. Also binds with high specificity to tRNAs. This is RNA-binding protein Hfq from Paracidovorax citrulli (strain AAC00-1) (Acidovorax citrulli).